The primary structure comprises 316 residues: Taste receptor type 2 member 3 (316 aa).

Residues 1 to 7 (MLGFTEG) are Extracellular-facing. A helical transmembrane segment spans residues 8 to 28 (IFLVLTVTEFILGNLVNGFIV). Residues 29–50 (SVNGSHWFKSKKISLSDFIITS) lie on the Cytoplasmic side of the membrane. A helical transmembrane segment spans residues 51 to 71 (LALFRIFLLWIIFTDSLIIVF). Residues 72-86 (SYHTHDSGIRMQLID) lie on the Extracellular side of the membrane. A helical membrane pass occupies residues 87–107 (VFWTFTNHFSIWLISCLSVFY). The Cytoplasmic portion of the chain corresponds to 108 to 128 (CLKIATFSHPSFLWLKWRASR). The helical transmembrane segment at 129-149 (VVVGMLWGALVLSCVCTMSLM) threads the bilayer. Over 150 to 186 (NEFKIYSALTGSRDTQNMTEYIRLKRHEYNLMHVLGN) the chain is Extracellular. The N-linked (GlcNAc...) asparagine glycan is linked to Asn-166. The chain crosses the membrane as a helical span at residues 187-207 (LWKIPSLIVSLIAYFLLLLSL). The Cytoplasmic segment spans residues 208–234 (GKHTQQMQKYSVGSRDQSAEAHRRAMR). A helical transmembrane segment spans residues 235-255 (IILSFLLFFLFYFLSFVILSS). At 256-266 (SRFLPETKIAR) the chain is on the extracellular side. The helical transmembrane segment at 267-287 (IIGVVITMSYLVGDSLILILG) threads the bilayer. The Cytoplasmic portion of the chain corresponds to 288–316 (NNKLKQTFVAILPCECGHPKPGSKRFFAS).

The protein belongs to the G-protein coupled receptor T2R family.

It localises to the membrane. Its function is as follows. Gustducin-coupled receptor implicated in the perception of bitter compounds in the oral cavity and the gastrointestinal tract. Signals through PLCB2 and the calcium-regulated cation channel TRPM5. The polypeptide is Taste receptor type 2 member 3 (Rattus norvegicus (Rat)).